We begin with the raw amino-acid sequence, 905 residues long: Chitin synthase 3B (905 aa).

Residues 1 to 10 (MAYNGRDQEY) show a composition bias toward basic and acidic residues. Residues 1-136 (MAYNGRDQEY…GGGGGLGRSK (136 aa)) form a disordered region. Residues 81 to 93 (GPTGYGDTGGSFG) show a composition bias toward gly residues. Asn536 carries N-linked (GlcNAc...) asparagine glycosylation. A helical transmembrane segment spans residues 562–584 (MFFLHIQLIYTTLNTMFAWFSLG). An N-linked (GlcNAc...) asparagine glycan is attached at Asn601. 6 helical membrane passes run 618-638 (IVNA…FILA), 653-673 (SFMV…YLVV), 705-725 (VILV…FMYL), 733-753 (SFPY…VYAF), 832-852 (TGLV…ITST), and 873-893 (FLLY…LWFL).

Belongs to the chitin synthase family. Class III subfamily.

The protein resides in the cell membrane. The enzyme catalyses [(1-&gt;4)-N-acetyl-beta-D-glucosaminyl](n) + UDP-N-acetyl-alpha-D-glucosamine = [(1-&gt;4)-N-acetyl-beta-D-glucosaminyl](n+1) + UDP + H(+). In terms of biological role, polymerizes chitin, a structural polymer of the cell wall and septum, by transferring the sugar moiety of UDP-GlcNAc to the non-reducing end of the growing chitin polymer. Plays essential functions in fungal survival and host infection. This Gibberella zeae (strain ATCC MYA-4620 / CBS 123657 / FGSC 9075 / NRRL 31084 / PH-1) (Wheat head blight fungus) protein is Chitin synthase 3B.